The primary structure comprises 145 residues: Ribosomal RNA large subunit methyltransferase H (145 aa).

S-adenosyl-L-methionine is bound by residues glycine 94 and 113-118 (LSPLTF).

The protein belongs to the RNA methyltransferase RlmH family. Homodimer.

It is found in the cytoplasm. It catalyses the reaction pseudouridine(1915) in 23S rRNA + S-adenosyl-L-methionine = N(3)-methylpseudouridine(1915) in 23S rRNA + S-adenosyl-L-homocysteine + H(+). Functionally, specifically methylates the pseudouridine at position 1915 (m3Psi1915) in 23S rRNA. This Sorangium cellulosum (strain So ce56) (Polyangium cellulosum (strain So ce56)) protein is Ribosomal RNA large subunit methyltransferase H.